A 457-amino-acid polypeptide reads, in one-letter code: MQHDDTIAAIATPLGQGGIGIIRISGPASLEVLRALFRPSSSRFGGFRPWTLHHGTITDGCDPLDDVLAVHMPGPRTFTGEDVSEIHCHGGSGVLAAVLEACVRHGARYAERGEFTRRAFLNGRMDLTQAEAVAEMIAAPSREGMRLAQAKLDGLLGQRVGALRARLDALRMQLCVAVDFPEEEVECLAPEAFLAEIEAVRQGVVELSAGYARTRCWQDGALVVLAGQVNAGKSSLMNALLGRRRAIVTDLPGTTRDFIEEPLNLSGLAIRLADTAGLRETGDIVEQEGVRMSRDLVAQADLVLLVTDATQGLQGPELELLRHAGPERVLVVFNKTDLLEGRILPSTPEGCRSVHVAAASGDGVESLVTAIRAAVLAATGAGEPEAGELAPNMRQAAALDKAATILDELAGDIRAHVPYDLCGVRLDGACAALMDVTGQSTPEAILDAIFASFCIGK.

(6S)-5-formyl-5,6,7,8-tetrahydrofolate-binding residues include R23, E85, and R124. Residues 220–376 (GALVVLAGQV…LVTAIRAAVL (157 aa)) enclose the TrmE-type G domain. N230 serves as a coordination point for K(+). Residues 230-235 (NAGKSS), 249-255 (TDLPGTT), and 274-277 (DTAG) contribute to the GTP site. A Mg(2+)-binding site is contributed by S234. K(+) contacts are provided by T249, L251, and T254. Residue T255 coordinates Mg(2+). Residue K457 participates in (6S)-5-formyl-5,6,7,8-tetrahydrofolate binding.

This sequence belongs to the TRAFAC class TrmE-Era-EngA-EngB-Septin-like GTPase superfamily. TrmE GTPase family. As to quaternary structure, homodimer. Heterotetramer of two MnmE and two MnmG subunits. K(+) is required as a cofactor.

The protein localises to the cytoplasm. In terms of biological role, exhibits a very high intrinsic GTPase hydrolysis rate. Involved in the addition of a carboxymethylaminomethyl (cmnm) group at the wobble position (U34) of certain tRNAs, forming tRNA-cmnm(5)s(2)U34. The chain is tRNA modification GTPase MnmE from Nitratidesulfovibrio vulgaris (strain ATCC 29579 / DSM 644 / CCUG 34227 / NCIMB 8303 / VKM B-1760 / Hildenborough) (Desulfovibrio vulgaris).